Reading from the N-terminus, the 257-residue chain is UPF0246 protein BF3795 (257 aa).

Belongs to the UPF0246 family.

In Bacteroides fragilis (strain ATCC 25285 / DSM 2151 / CCUG 4856 / JCM 11019 / LMG 10263 / NCTC 9343 / Onslow / VPI 2553 / EN-2), this protein is UPF0246 protein BF3795.